We begin with the raw amino-acid sequence, 137 residues long: uncharacterized protein (137 aa).

The next 4 membrane-spanning stretches (helical) occupy residues 14 to 34 (AVVVAILLYIFIILVVDGSIS), 48 to 68 (YHIIEFYDFIHIIGFLLSLSI), 84 to 104 (FFTIFFGITFILGITLFLGLT), and 109 to 129 (HIPSMRGYTTLMLFFFLLNLF).

Its subcellular location is the cell membrane. This is an uncharacterized protein from Methanocaldococcus jannaschii (strain ATCC 43067 / DSM 2661 / JAL-1 / JCM 10045 / NBRC 100440) (Methanococcus jannaschii).